The following is a 441-amino-acid chain: Cobyrinate a,c-diamide synthase (441 aa).

The 192-residue stretch at 243-434 folds into the GATase cobBQ-type domain; it reads TVAVADDAAF…AHVHPESTAF (192 aa). Cys323 serves as the catalytic Nucleophile.

The protein belongs to the CobB/CbiA family. It depends on Mg(2+) as a cofactor.

It catalyses the reaction cob(II)yrinate + 2 L-glutamine + 2 ATP + 2 H2O = cob(II)yrinate a,c diamide + 2 L-glutamate + 2 ADP + 2 phosphate + 2 H(+). It participates in cofactor biosynthesis; adenosylcobalamin biosynthesis; cob(II)yrinate a,c-diamide from sirohydrochlorin (anaerobic route): step 10/10. Functionally, catalyzes the ATP-dependent amidation of the two carboxylate groups at positions a and c of cobyrinate, using either L-glutamine or ammonia as the nitrogen source. This is Cobyrinate a,c-diamide synthase from Halobacterium salinarum (strain ATCC 700922 / JCM 11081 / NRC-1) (Halobacterium halobium).